The primary structure comprises 209 residues: Redox-sensing transcriptional repressor Rex (209 aa).

The H-T-H motif DNA-binding region spans 16–55 (LYYRFIQNLSLSGKQRVSSAELSEAVKVDSATIRRDFSYF). Position 90–95 (90–95 (GVGNLG)) interacts with NAD(+).

Belongs to the transcriptional regulatory Rex family. Homodimer.

It localises to the cytoplasm. Modulates transcription in response to changes in cellular NADH/NAD(+) redox state. This chain is Redox-sensing transcriptional repressor Rex, found in Bacillus cereus (strain AH187).